A 129-amino-acid polypeptide reads, in one-letter code: MNWLDTVRWDDKGLVPVIAQEAASGDVLMFAWMNREALQKTAELGQAVYFSRSRGRLWHKGEESGHLQTVHEIRLDCDSDVVLLKVTQLGHEPGIACHTGRHSCFFSLYKDGQWVATEPVLKDPASIYK.

Asp76 contributes to the Mg(2+) binding site. Cys77 contacts Zn(2+). Residues Asp78 and Asp80 each coordinate Mg(2+). 2 residues coordinate Zn(2+): Cys97 and Cys104.

Belongs to the PRA-CH family. Homodimer. Mg(2+) serves as cofactor. It depends on Zn(2+) as a cofactor.

It is found in the cytoplasm. It catalyses the reaction 1-(5-phospho-beta-D-ribosyl)-5'-AMP + H2O = 1-(5-phospho-beta-D-ribosyl)-5-[(5-phospho-beta-D-ribosylamino)methylideneamino]imidazole-4-carboxamide. Its pathway is amino-acid biosynthesis; L-histidine biosynthesis; L-histidine from 5-phospho-alpha-D-ribose 1-diphosphate: step 3/9. Its function is as follows. Catalyzes the hydrolysis of the adenine ring of phosphoribosyl-AMP. The sequence is that of Phosphoribosyl-AMP cyclohydrolase from Polaromonas naphthalenivorans (strain CJ2).